A 388-amino-acid chain; its full sequence is Glucose-6-phosphate/phosphate translocator 1, chloroplastic (388 aa).

Residues 1–65 constitute a chloroplast transit peptide; the sequence is MVLSVKQTLS…LRAKSPVVRC (65 aa). 8 consecutive transmembrane segments (helical) span residues 95–115, 129–149, 158–178, 211–231, 233–253, 273–293, 305–325, and 363–383; these read LKIG…NIYN, STLS…VGIV, FWKT…AATV, FPTS…LSAL, ELNF…AFVF, YACL…AVEG, LATV…FYHL, and TPVQ…TFLY. Positions 112–229 constitute an EamA domain; the sequence is NIYNKKVLNA…IPIIGGCALS (118 aa).

It belongs to the TPT transporter family. GPT (TC 2.A.7.9) subfamily. As to expression, expressed in seeds, flowers, rosette leaves, and roots, with highest levels found in stamens. Found in the root cap, in guard cells and in mesophyll cells.

It localises to the plastid. The protein localises to the chloroplast membrane. The protein resides in the endoplasmic reticulum membrane. It is found in the peroxisome membrane. In terms of biological role, glucose 6-phosphate (Glc6P) transporter. Also transports inorganic phosphate, 3-phosphoglycerate, triose phosphates and, to a leser extent, phosphoenolpyruvate. Responsible for the transport of Glc6P into plastids of heterotrophic tissues where it can be used as a carbon source for starch biosynthesis, as substrate for fatty acid biosynthesis or as substrate for NADPH generation via the oxidative pentose phosphate pathway (OPPP). Required for pollen maturation and embryo sac development. Preferentially exchanges Glc6P for ribulose-5-phosphate (Ru5P) in reconstituted yeast proteoliposomes. May supply the substrate (Glc6P) for OPPP reactions inside peroxisomes and exchange it with the product Ru5P which leaves the organelle. This chain is Glucose-6-phosphate/phosphate translocator 1, chloroplastic, found in Arabidopsis thaliana (Mouse-ear cress).